The sequence spans 440 residues: C4-dicarboxylate TRAP transporter large permease protein DctM (440 aa).

13 helical membrane-spanning segments follow: residues 4-24 (LIIF…SISL), 54-74 (FEIM…HGGV), 89-109 (WHGG…AVSG), 112-132 (PATV…QGFP), 148-168 (ILIP…GMVV), 181-201 (VGEL…FLAF), 230-250 (AAWG…GIFT), 255-275 (AAMS…DLTL), 291-311 (MLLY…HEGI), 318-338 (WMVN…ILLL), 349-369 (IVLI…IDPV), 370-390 (HFGI…PVGL), and 410-430 (VWPW…VPAI).

This sequence belongs to the TRAP transporter large permease family. As to quaternary structure, the complex comprises the extracytoplasmic solute receptor protein DctP, and the two transmembrane proteins DctQ and DctM.

The protein resides in the cell inner membrane. Functionally, part of the tripartite ATP-independent periplasmic (TRAP) transport system DctPQM involved in C4-dicarboxylates uptake. The chain is C4-dicarboxylate TRAP transporter large permease protein DctM from Rhodobacter capsulatus (Rhodopseudomonas capsulata).